A 407-amino-acid polypeptide reads, in one-letter code: Arginine biosynthesis bifunctional protein ArgJ (407 aa).

Substrate-binding residues include threonine 157, lysine 183, threonine 194, glutamate 280, asparagine 402, and threonine 407. The Nucleophile role is filled by threonine 194.

It belongs to the ArgJ family. In terms of assembly, heterotetramer of two alpha and two beta chains.

The protein resides in the cytoplasm. The enzyme catalyses N(2)-acetyl-L-ornithine + L-glutamate = N-acetyl-L-glutamate + L-ornithine. It carries out the reaction L-glutamate + acetyl-CoA = N-acetyl-L-glutamate + CoA + H(+). It functions in the pathway amino-acid biosynthesis; L-arginine biosynthesis; L-ornithine and N-acetyl-L-glutamate from L-glutamate and N(2)-acetyl-L-ornithine (cyclic): step 1/1. It participates in amino-acid biosynthesis; L-arginine biosynthesis; N(2)-acetyl-L-ornithine from L-glutamate: step 1/4. In terms of biological role, catalyzes two activities which are involved in the cyclic version of arginine biosynthesis: the synthesis of N-acetylglutamate from glutamate and acetyl-CoA as the acetyl donor, and of ornithine by transacetylation between N(2)-acetylornithine and glutamate. The sequence is that of Arginine biosynthesis bifunctional protein ArgJ from Oceanobacillus iheyensis (strain DSM 14371 / CIP 107618 / JCM 11309 / KCTC 3954 / HTE831).